A 508-amino-acid polypeptide reads, in one-letter code: Flavonoid 3',5'-hydroxylase 2 (508 aa).

Position 443 (Cys-443) interacts with heme.

Belongs to the cytochrome P450 family. It depends on heme as a cofactor. As to expression, flowers.

The protein localises to the microsome. Its subcellular location is the endoplasmic reticulum. The catalysed reaction is a 3',5'-unsubstituted flavanone + 2 reduced [NADPH--hemoprotein reductase] + 2 O2 = a 3',5'-dihydroxyflavanone + 2 oxidized [NADPH--hemoprotein reductase] + 2 H2O + 2 H(+). It participates in pigment biosynthesis; anthocyanin biosynthesis. Catalyzes the 3'5'-hydroxylation of naringenin and eriodictyol to form 5,7,3,'4',5'-pentahydroxyflavanone and 3',5'-hydroxylation of dihydrokaempferol and dihydroquercetin to form dihydromyricetin. The protein is Flavonoid 3',5'-hydroxylase 2 (CYP75A3) of Petunia hybrida (Petunia).